Here is a 130-residue protein sequence, read N- to C-terminus: Small ribosomal subunit protein uS9 (130 aa).

The protein belongs to the universal ribosomal protein uS9 family.

This is Small ribosomal subunit protein uS9 from Shewanella sediminis (strain HAW-EB3).